The following is a 452-amino-acid chain: MNIVILAAGMGKRMQSALPKVLHPLAGKPLLSHVIDTARQLSPSRLCVIYGHGGEQVPQLLQAKDLSFAKQEPQLGTGHAVMQAVPQLDDHTPTLILYGDVPLTTAASLQRLLDSAGNDKLGILTVNLGNPTGYGRIVRENGAITRIVEQKDAKPAELEINEINTGIMVAPTAALKRWLAKLSNNNAQGEYYLTDIVASAVADGVAVVSAQPDHEWETHGVNSKVQLAELERIHQRNIAHALLEQGVTLADPARIDVRGTLTCGRDVTIDVGCVFEGDVSLADGVRIDANCVIHNSTIGARSHVRPYSHFENAVVGAECIIGPYARLRPGTVLAEDVHIGNFVEVKNSDIAAHSKANHLTYVGDSTVGSRVNIGAGTITCNYDGVNKSRTIIEDDVFVGSATQLIAPIRVGKGATLGAGTTLTKDAPADKLTVSRAKQITVDNWQRPVKIKK.

Residues 1-224 (MNIVILAAGM…EWETHGVNSK (224 aa)) are pyrophosphorylase. UDP-N-acetyl-alpha-D-glucosamine contacts are provided by residues 6–9 (LAAG), K20, Q71, 76–77 (GT), 98–100 (YGD), G135, E149, N164, and N222. Position 100 (D100) interacts with Mg(2+). N222 contacts Mg(2+). A linker region spans residues 225 to 245 (VQLAELERIHQRNIAHALLEQ). The interval 246 to 452 (GVTLADPARI…NWQRPVKIKK (207 aa)) is N-acetyltransferase. 2 residues coordinate UDP-N-acetyl-alpha-D-glucosamine: R328 and K346. H358 functions as the Proton acceptor in the catalytic mechanism. Positions 361 and 372 each coordinate UDP-N-acetyl-alpha-D-glucosamine. Acetyl-CoA is bound by residues A375, 381–382 (NY), S400, A418, and R435.

It in the N-terminal section; belongs to the N-acetylglucosamine-1-phosphate uridyltransferase family. The protein in the C-terminal section; belongs to the transferase hexapeptide repeat family. In terms of assembly, homotrimer. Mg(2+) serves as cofactor.

The protein resides in the cytoplasm. The catalysed reaction is alpha-D-glucosamine 1-phosphate + acetyl-CoA = N-acetyl-alpha-D-glucosamine 1-phosphate + CoA + H(+). The enzyme catalyses N-acetyl-alpha-D-glucosamine 1-phosphate + UTP + H(+) = UDP-N-acetyl-alpha-D-glucosamine + diphosphate. It functions in the pathway nucleotide-sugar biosynthesis; UDP-N-acetyl-alpha-D-glucosamine biosynthesis; N-acetyl-alpha-D-glucosamine 1-phosphate from alpha-D-glucosamine 6-phosphate (route II): step 2/2. Its pathway is nucleotide-sugar biosynthesis; UDP-N-acetyl-alpha-D-glucosamine biosynthesis; UDP-N-acetyl-alpha-D-glucosamine from N-acetyl-alpha-D-glucosamine 1-phosphate: step 1/1. It participates in bacterial outer membrane biogenesis; LPS lipid A biosynthesis. Catalyzes the last two sequential reactions in the de novo biosynthetic pathway for UDP-N-acetylglucosamine (UDP-GlcNAc). The C-terminal domain catalyzes the transfer of acetyl group from acetyl coenzyme A to glucosamine-1-phosphate (GlcN-1-P) to produce N-acetylglucosamine-1-phosphate (GlcNAc-1-P), which is converted into UDP-GlcNAc by the transfer of uridine 5-monophosphate (from uridine 5-triphosphate), a reaction catalyzed by the N-terminal domain. The protein is Bifunctional protein GlmU of Janthinobacterium sp. (strain Marseille) (Minibacterium massiliensis).